The sequence spans 315 residues: Methenyltetrahydromethanopterin cyclohydrolase (315 aa).

This sequence belongs to the MCH family.

The protein resides in the cytoplasm. It catalyses the reaction 5,10-methenyl-5,6,7,8-tetrahydromethanopterin + H2O = N(5)-formyl-5,6,7,8-tetrahydromethanopterin + H(+). It participates in one-carbon metabolism; methanogenesis from CO(2); 5,10-methenyl-5,6,7,8-tetrahydromethanopterin from CO(2): step 3/3. In terms of biological role, catalyzes the reversible interconversion of 5-formyl-H(4)MPT to methenyl-H(4)MPT(+). This chain is Methenyltetrahydromethanopterin cyclohydrolase, found in Methanoculleus marisnigri (strain ATCC 35101 / DSM 1498 / JR1).